Reading from the N-terminus, the 572-residue chain is Dityrosine transporter 1 (572 aa).

Disordered stretches follow at residues 1–28 (MGSE…STFH) and 49–95 (RANI…SPDT). The Cytoplasmic segment spans residues 1 to 110 (MGSEPFQKKN…YTYFSKDQRL (110 aa)). Residues 13-28 (LQINSQESGTTRSTFH) show a composition bias toward polar residues. Residues 50–62 (ANIDHDVFHEHPD) are compositionally biased toward basic and acidic residues. The span at 83-95 (SSNSQSRDPSPDT) shows a compositional bias: polar residues. A helical transmembrane segment spans residues 111 to 131 (IIFGIIIFIGFLGPMSGNIYI). At 132-149 (PALPLLQREYDVSATTIN) the chain is on the extracellular side. The helical transmembrane segment at 150-170 (ATVSVFMAVFSVGPLFWGALA) threads the bilayer. Topologically, residues 171 to 184 (DFGGRKFLYMVSLS) are cytoplasmic. The chain crosses the membrane as a helical span at residues 185–205 (LMLIVNILLAAVPVNIAALFV). Residues 206-207 (LR) are Extracellular-facing. Residues 208–228 (IFQAFASSSVISLGAGTVTDV) form a helical membrane-spanning segment. Topologically, residues 229-240 (VPPKHRGKAIAY) are cytoplasmic. The helical transmembrane segment at 241–261 (FMMGPNMGPIIAPIVAGLILM) threads the bilayer. At 262 to 267 (KGNYWR) the chain is on the extracellular side. A helical transmembrane segment spans residues 268–288 (WLFGFTSIMTGIALILVTALL). At 289–366 (PETLRCIVGN…TLYWKMIKCP (78 aa)) the chain is on the cytoplasmic side. A helical membrane pass occupies residues 367 to 387 (PIIITSVSTALLFSSYYAFSV). Over 388-398 (TFSYYLEHDYR) the chain is Extracellular. Residues 399–419 (FTMLEIGAAYVCPGVAMLLGS) traverse the membrane as a helical segment. Over 420-446 (QSGGHLSDYLRSRWIKSHPKKKFPAEF) the chain is Cytoplasmic. A helical membrane pass occupies residues 447-469 (RLLLNLIGILLTICGTIGYGWAI). The Extracellular segment spans residues 470-472 (FFH). The chain crosses the membrane as a helical span at residues 473–493 (YHFVVLLVFSALTAFGMTWCS). Topologically, residues 494–520 (NTSMTYLTELFPKRAAGTVAVSSFFRN) are cytoplasmic. A helical transmembrane segment spans residues 521-541 (VGAAISSAIILQLCNAMGIGW). Cys-542 is a topological domain (extracellular). The chain crosses the membrane as a helical span at residues 543 to 563 (FTGLGLCSSISLIGILYLLIF). The segment at 548–572 (LCSSISLIGILYLLIFQRKYTAKEF) is required for the localization to the prospore membrane. Over 564-572 (QRKYTAKEF) the chain is Cytoplasmic.

It belongs to the major facilitator superfamily. CAR1 family. In terms of processing, phosphorylated.

The protein resides in the prospore membrane. Functionally, prospore-specific dityrosine transporter responsible for translocation of dityrosine through the prospore membrane and required for the formation of the outermost layer of the spore. In Saccharomyces cerevisiae (strain ATCC 204508 / S288c) (Baker's yeast), this protein is Dityrosine transporter 1 (DTR1).